Reading from the N-terminus, the 58-residue chain is UPF0391 membrane protein Shewmr4_2671 (58 aa).

2 consecutive transmembrane segments (helical) span residues 6–26 (LMFL…IAGA) and 28–48 (AGIA…SLLV).

Belongs to the UPF0391 family.

It localises to the cell membrane. The protein is UPF0391 membrane protein Shewmr4_2671 of Shewanella sp. (strain MR-4).